The primary structure comprises 120 residues: Transcription elongation factor 1 homolog (120 aa).

Zn(2+) contacts are provided by Cys25, Cys28, Cys49, and Cys52. The segment covering 84-110 has biased composition (acidic residues); the sequence is EDDVVQEEEEEVEEEEEEEEEEDDEDD. A disordered region spans residues 84 to 120; it reads EDDVVQEEEEEVEEEEEEEEEEDDEDDHVSVKRKYNF.

Belongs to the ELOF1 family.

It localises to the nucleus. Transcription elongation factor implicated in the maintenance of proper chromatin structure in actively transcribed regions. The sequence is that of Transcription elongation factor 1 homolog from Arabidopsis thaliana (Mouse-ear cress).